The following is a 123-amino-acid chain: Small ribosomal subunit protein uS12 (123 aa).

3-methylthioaspartic acid is present on D89.

The protein belongs to the universal ribosomal protein uS12 family. Part of the 30S ribosomal subunit. Contacts proteins S8 and S17. May interact with IF1 in the 30S initiation complex.

Its function is as follows. With S4 and S5 plays an important role in translational accuracy. Interacts with and stabilizes bases of the 16S rRNA that are involved in tRNA selection in the A site and with the mRNA backbone. Located at the interface of the 30S and 50S subunits, it traverses the body of the 30S subunit contacting proteins on the other side and probably holding the rRNA structure together. The combined cluster of proteins S8, S12 and S17 appears to hold together the shoulder and platform of the 30S subunit. The sequence is that of Small ribosomal subunit protein uS12 from Myxococcus xanthus.